Consider the following 176-residue polypeptide: Small ribosomal subunit protein uS8c (176 aa).

Belongs to the universal ribosomal protein uS8 family. As to quaternary structure, part of the 30S ribosomal subunit.

It localises to the plastid. It is found in the chloroplast. Its function is as follows. One of the primary rRNA binding proteins, it binds directly to 16S rRNA central domain where it helps coordinate assembly of the platform of the 30S subunit. In Stigeoclonium helveticum (Green alga), this protein is Small ribosomal subunit protein uS8c (rps8).